The sequence spans 177 residues: Peptidyl-tRNA hydrolase (177 aa).

TRNA is bound at residue tyrosine 14. Histidine 19 functions as the Proton acceptor in the catalytic mechanism. 3 residues coordinate tRNA: phenylalanine 64, asparagine 66, and asparagine 112.

The protein belongs to the PTH family. In terms of assembly, monomer.

The protein localises to the cytoplasm. It carries out the reaction an N-acyl-L-alpha-aminoacyl-tRNA + H2O = an N-acyl-L-amino acid + a tRNA + H(+). In terms of biological role, hydrolyzes ribosome-free peptidyl-tRNAs (with 1 or more amino acids incorporated), which drop off the ribosome during protein synthesis, or as a result of ribosome stalling. Catalyzes the release of premature peptidyl moieties from peptidyl-tRNA molecules trapped in stalled 50S ribosomal subunits, and thus maintains levels of free tRNAs and 50S ribosomes. The protein is Peptidyl-tRNA hydrolase of Latilactobacillus sakei (Lactobacillus sakei).